The sequence spans 340 residues: Ornithine carbamoyltransferase (340 aa).

Carbamoyl phosphate is bound by residues 57-60, Gln-84, Arg-108, and 135-138; these read STRT and HPTQ. L-ornithine contacts are provided by residues Asn-167, Asp-231, and 235 to 236; that span reads SM. Residues 272 to 273 and Arg-317 contribute to the carbamoyl phosphate site; that span reads CL.

It belongs to the aspartate/ornithine carbamoyltransferase superfamily. OTCase family.

The protein resides in the cytoplasm. It carries out the reaction carbamoyl phosphate + L-ornithine = L-citrulline + phosphate + H(+). The protein operates within amino-acid biosynthesis; L-arginine biosynthesis; L-arginine from L-ornithine and carbamoyl phosphate: step 1/3. Its function is as follows. Reversibly catalyzes the transfer of the carbamoyl group from carbamoyl phosphate (CP) to the N(epsilon) atom of ornithine (ORN) to produce L-citrulline. This Lactiplantibacillus plantarum (strain ATCC BAA-793 / NCIMB 8826 / WCFS1) (Lactobacillus plantarum) protein is Ornithine carbamoyltransferase (argF).